We begin with the raw amino-acid sequence, 549 residues long: MSSQHSTDDLMNSHVFSGGFSTLDDKGFQDVPIHTDMPGSISVEPSSEDANVGSVNGNINETPVFEADRLIAEATMNPSAASSTTGENSISQTGSGPFLRIRIVDIEAENSKDPVIKMNVQTTLPAYRSKLYKNVRRTHAEFKKFAKYLISTHPECLIPAVPEAKTSVSSGIKEDLIYLKSGLQSWLNYVSTNPNLLYDPELQLFVESDYGYSPLINTGNPTSGLKRKALKQFPLPPDPCQALANLRPIVKSFYKNAKDAEIKLEKLVNRKQSLALTHADLGQSLIDYSVEEQHNGLANALNRVGKMLQAISDVRIMQSSKQLVTLADSLCYASDNAFVVKEILSNRHILMRDLISSKNQTNSYLSAANRLQDSPKISKARTDDALQALEVARVHEKLLSDKVDFVTLNLVKESKTYTKKTSVSLQKAIREYVEKEAYYERRLLSIMESIRPHIRNIDPFGGLSRLGREEYPRRLSNPPPSQKTNQDAWTNRKRPGYSSSFDGSSQSTFNPSNNDGAHNTSENADELVEPPIGNERLDPKSVANLLNAI.

In terms of domain architecture, PX spans 96 to 213; sequence GPFLRIRIVD…LFVESDYGYS (118 aa). Residues 250–281 are a coiled coil; that stretch reads VKSFYKNAKDAEIKLEKLVNRKQSLALTHADL. The tract at residues 470–540 is disordered; it reads EYPRRLSNPP…PIGNERLDPK (71 aa). Over residues 498–507 the composition is skewed to low complexity; the sequence is SSSFDGSSQS. Polar residues predominate over residues 508-522; the sequence is TFNPSNNDGAHNTSE.

The protein belongs to the VPS17 family. Component of the retromer complex which consists of vps29, vps6, vps35, vps5 and vps17.

The protein resides in the cytoplasm. The protein localises to the nucleus. Functionally, plays a role in vesicular protein sorting. Required for the endosome-to-Golgi retrieval of the vacuolar protein sorting receptor pep1/vps10. Component of the membrane-associated retromer complex which is essential in endosome-to-Golgi retrograde transport. The vps29-vps26-vps35 subcomplex may be involved in cargo selection. The protein is Vacuolar protein sorting-associated protein 17 (vps17) of Schizosaccharomyces pombe (strain 972 / ATCC 24843) (Fission yeast).